Consider the following 201-residue polypeptide: Lipopolysaccharide core heptose(II)-phosphate phosphatase (201 aa).

Residues 1–35 (MLAFTLRFIKNKRYLATLAGALVIIAGLTSQHAWS) form the signal peptide.

It belongs to the phosphoglycerate mutase family. Ais subfamily.

It is found in the periplasm. The protein operates within bacterial outer membrane biogenesis; lipopolysaccharide metabolism. Catalyzes the dephosphorylation of heptose(II) of the outer membrane lipopolysaccharide core. This chain is Lipopolysaccharide core heptose(II)-phosphate phosphatase, found in Salmonella heidelberg (strain SL476).